Reading from the N-terminus, the 573-residue chain is 3-(3-hydroxy-phenyl)propionate/3-hydroxycinnamic acid hydroxylase (573 aa).

FAD contacts are provided by residues 18 to 47 (DVVI…IVEE) and 283 to 293 (FRKGRMFLAGD).

It belongs to the PheA/TfdB FAD monooxygenase family. It depends on FAD as a cofactor.

The catalysed reaction is 3-(3-hydroxyphenyl)propanoate + NADH + O2 + H(+) = 3-(2,3-dihydroxyphenyl)propanoate + NAD(+) + H2O. It carries out the reaction (2E)-3-(3-hydroxyphenyl)prop-2-enoate + NADH + O2 + H(+) = (2E)-3-(2,3-dihydroxyphenyl)prop-2-enoate + NAD(+) + H2O. Its pathway is aromatic compound metabolism; 3-phenylpropanoate degradation. In terms of biological role, catalyzes the insertion of one atom of molecular oxygen into position 2 of the phenyl ring of 3-(3-hydroxyphenyl)propionate (3-HPP) and hydroxycinnamic acid (3HCI). This is 3-(3-hydroxy-phenyl)propionate/3-hydroxycinnamic acid hydroxylase from Mycobacterium sp. (strain KMS).